The primary structure comprises 416 residues: Actin-like protein 9 (416 aa).

A disordered region spans residues 1–23 (MDPNQGNPLEPQDSPEIPKPSLN).

It belongs to the actin family. In terms of assembly, interacts with ACTL7A.

The protein resides in the cytoplasmic vesicle. It localises to the secretory vesicle. It is found in the acrosome. Its subcellular location is the cytoplasm. The protein localises to the cytoskeleton. The protein resides in the perinuclear theca. In terms of biological role, testis-specic protein that plays an important role in fusion of proacrosomal vesicles and perinuclear theca formation. This Bos taurus (Bovine) protein is Actin-like protein 9 (ACTL9).